We begin with the raw amino-acid sequence, 770 residues long: Pheromone-regulated membrane protein 10 (770 aa).

Disordered regions lie at residues 1-125 (MDGR…DGDD) and 139-169 (NQGG…RNEE). Composition is skewed to polar residues over residues 49 to 63 (SGKS…NNDN) and 78 to 93 (DLSS…SKGT). A compositionally biased stretch (basic and acidic residues) spans 155–169 (ENGKDDIEKNNRNEE). Transmembrane regions (helical) follow at residues 453–473 (WMCV…AFGG), 475–495 (WVNL…QFIL), 505–525 (VFEI…GSIP), 529–549 (ICFG…YIIL), 568–588 (FYAI…SALF), 604–624 (LISP…ISLL), 629–649 (ISQL…TYWA), 659–679 (FTAA…SRIW), 681–701 (GLAV…GIAS), and 740–760 (IQVC…VYPF).

Belongs to the ThrE exporter (TC 2.A.79) family.

The protein localises to the membrane. The protein is Pheromone-regulated membrane protein 10 (PRM10) of Saccharomyces cerevisiae (strain YJM789) (Baker's yeast).